The following is a 37-amino-acid chain: NAD-reducing hydrogenase HoxS subunit alpha (37 aa).

The protein belongs to the complex I 51 kDa subunit family. In terms of assembly, tetramer of an alpha and a gamma subunits (flavin-containing dimer), and a delta and a nickel-containing beta subunits (hydrogenase dimer). The cofactor is FMN. [4Fe-4S] cluster serves as cofactor.

The protein resides in the cytoplasm. It carries out the reaction H2 + NAD(+) = NADH + H(+). Functionally, subunits alpha and gamma of HoxS constitute an NADH--oxidoreductase. The protein is NAD-reducing hydrogenase HoxS subunit alpha (hoxF) of Rhodococcus opacus (Nocardia opaca).